A 327-amino-acid chain; its full sequence is GMP reductase (327 aa).

The active-site Thioimidate intermediate is C176. 205-228 (IIADGGIRTHGDIAKSIRFGASMV) serves as a coordination point for NADP(+).

The protein belongs to the IMPDH/GMPR family. GuaC type 2 subfamily.

The enzyme catalyses IMP + NH4(+) + NADP(+) = GMP + NADPH + 2 H(+). Its function is as follows. Catalyzes the irreversible NADPH-dependent deamination of GMP to IMP. It functions in the conversion of nucleobase, nucleoside and nucleotide derivatives of G to A nucleotides, and in maintaining the intracellular balance of A and G nucleotides. The polypeptide is GMP reductase (Streptococcus gordonii (strain Challis / ATCC 35105 / BCRC 15272 / CH1 / DL1 / V288)).